The primary structure comprises 386 residues: Protein RETICULATA-RELATED 4, chloroplastic (386 aa).

A chloroplast-targeting transit peptide spans 1-61 (MAIASCFFCV…RRVPITPVLS (61 aa)). The tract at residues 61 to 99 (SASSGNGGSDNNGGGLSGGGGGGDGGKNDGDGHGDEDRD) is disordered. Residues 65–85 (GNGGSDNNGGGLSGGGGGGDG) are compositionally biased toward gly residues. Positions 86–99 (GKNDGDGHGDEDRD) are enriched in basic and acidic residues. Helical transmembrane passes span 201-221 (VVFA…YLPA) and 273-293 (KLFA…NAFI).

Belongs to the RETICULATA family.

Its subcellular location is the plastid. It localises to the chloroplast membrane. May play a role in leaf development. This Arabidopsis thaliana (Mouse-ear cress) protein is Protein RETICULATA-RELATED 4, chloroplastic.